We begin with the raw amino-acid sequence, 580 residues long: TRAF-type zinc finger domain-containing protein 1 (580 aa).

Ala2 carries the N-acetylalanine modification. The TRAF-type zinc-finger motif lies at 27–103; sequence IHEIHCQRNI…DLELSVVKLK (77 aa). 10 positions are modified to phosphoserine: Ser278, Ser320, Ser326, Ser327, Ser409, Ser415, Ser430, Ser450, Ser469, and Ser532. Disordered stretches follow at residues 395–453, 468–509, and 524–580; these read TANH…SPNR, PSGP…ASGH, and FAPS…EEEE. Residues 407-417 show a composition bias toward polar residues; sequence QDSQPENTSAE.

Interacts with MAVS, TICAM1, TRAF1, TRAF2, TRAF3 and TRAF6. In terms of tissue distribution, expressed in skeletal muscle, brain, liver, kidney, spleen and bone marrow. Expression depends on STAT1.

In terms of biological role, negative feedback regulator that controls excessive innate immune responses. Regulates both Toll-like receptor 4 (TLR4) and DDX58/RIG1-like helicases (RLH) pathways. May inhibit the LTR pathway by direct interaction with TRAF6 and attenuation of NF-kappa-B activation. May negatively regulate the RLH pathway downstream from MAVS and upstream of NF-kappa-B and IRF3. The chain is TRAF-type zinc finger domain-containing protein 1 (Trafd1) from Mus musculus (Mouse).